Here is a 392-residue protein sequence, read N- to C-terminus: Formate-dependent phosphoribosylglycinamide formyltransferase (392 aa).

N(1)-(5-phospho-beta-D-ribosyl)glycinamide is bound by residues E20 to L21 and E80. ATP-binding positions include R112, K153, S158–Q163, E193–V196, and E201. An ATP-grasp domain is found at R117–L306. The Mg(2+) site is built by E265 and E277. N(1)-(5-phospho-beta-D-ribosyl)glycinamide contacts are provided by residues D284, K355, and R362–R363.

The protein belongs to the PurK/PurT family. Homodimer.

The catalysed reaction is N(1)-(5-phospho-beta-D-ribosyl)glycinamide + formate + ATP = N(2)-formyl-N(1)-(5-phospho-beta-D-ribosyl)glycinamide + ADP + phosphate + H(+). The protein operates within purine metabolism; IMP biosynthesis via de novo pathway; N(2)-formyl-N(1)-(5-phospho-D-ribosyl)glycinamide from N(1)-(5-phospho-D-ribosyl)glycinamide (formate route): step 1/1. In terms of biological role, involved in the de novo purine biosynthesis. Catalyzes the transfer of formate to 5-phospho-ribosyl-glycinamide (GAR), producing 5-phospho-ribosyl-N-formylglycinamide (FGAR). Formate is provided by PurU via hydrolysis of 10-formyl-tetrahydrofolate. In Aeromonas salmonicida (strain A449), this protein is Formate-dependent phosphoribosylglycinamide formyltransferase.